Consider the following 272-residue polypeptide: uncharacterized protein (272 aa).

The next 2 membrane-spanning stretches (helical) occupy residues 9–29 (GGDIIFLMFTTLAAVSTASEH) and 252–272 (SHISFLVPFFSVILVSLISFI).

The protein localises to the membrane. This is an uncharacterized protein from Caenorhabditis elegans.